The following is a 239-amino-acid chain: Regulator protein TubY (239 aa).

A required to bind TubZ region spans residues 138-239 (INNTISQQLS…KGFFGKLFKR (102 aa)). Residues 150-229 (LNAHNEALEQ…KQQNEEQNNK (80 aa)) are a coiled coil. Positions 217 to 228 (EERKQQNEEQNN) are enriched in basic and acidic residues. Residues 217–239 (EERKQQNEEQNNKKGFFGKLFKR) form a disordered region. Low complexity predominate over residues 229–239 (KKGFFGKLFKR).

As to quaternary structure, forms homooctamers in the absence of the last 13 residues; the coiled coil domain is required for oligomerization. In the presence of GTP and Mg(2+) binds to TubZ and also to TubZ-TubR-tubC DNA; the latter is reshaped from large filament bundles to rings of 30-40 nm diameter.

It is found in the host cytoplasm. Its function is as follows. A probable TubZ filament regulator that is part of the type III partition system presumably used to ensure correct segregation of this bacteriophage. Binds to TubZ in the presence of GTP and Mg(2+), and to TubZ-TubR-tubC (tubC is the centromere-like site). The latter complex is reshaped from large bundles to rings by TubY. Modifies TubZ filaments formed in the presence of GDP to make them thinner and more flexible; in GDP and lacking the last 8 residues of TubZ makes rings without TubT-tubC. The protein is Regulator protein TubY of Clostridium botulinum C (Clostridium botulinum C bacteriophage).